Consider the following 314-residue polypeptide: Mycothiol acetyltransferase (314 aa).

2 consecutive N-acetyltransferase domains span residues 18–156 (ATIR…RPLA) and 168–314 (IRIA…MYQL). Glutamate 38 contributes to the 1D-myo-inositol 2-(L-cysteinylamino)-2-deoxy-alpha-D-glucopyranoside binding site. 92–94 (VVV) provides a ligand contact to acetyl-CoA. 1D-myo-inositol 2-(L-cysteinylamino)-2-deoxy-alpha-D-glucopyranoside contacts are provided by glutamate 195, lysine 234, and glutamate 248. Acetyl-CoA-binding positions include 252–254 (VGL) and 259–265 (QGHGLGR). Residue tyrosine 286 coordinates 1D-myo-inositol 2-(L-cysteinylamino)-2-deoxy-alpha-D-glucopyranoside.

This sequence belongs to the acetyltransferase family. MshD subfamily. In terms of assembly, monomer.

The catalysed reaction is 1D-myo-inositol 2-(L-cysteinylamino)-2-deoxy-alpha-D-glucopyranoside + acetyl-CoA = mycothiol + CoA + H(+). Catalyzes the transfer of acetyl from acetyl-CoA to desacetylmycothiol (Cys-GlcN-Ins) to form mycothiol. This chain is Mycothiol acetyltransferase, found in Catenulispora acidiphila (strain DSM 44928 / JCM 14897 / NBRC 102108 / NRRL B-24433 / ID139908).